The primary structure comprises 566 residues: Good for full DBP5 activity protein 2 (566 aa).

Positions 1–16 (MQVQKMVRDNSNNGSD) are enriched in polar residues. Residues 1-41 (MQVQKMVRDNSNNGSDKSVHWERRNNNGAGPRYRSRSGNTG) form a disordered region.

Functionally, high-copy suppressor of DBP5 mutation. The polypeptide is Good for full DBP5 activity protein 2 (GFD2) (Saccharomyces cerevisiae (strain ATCC 204508 / S288c) (Baker's yeast)).